Here is a 189-residue protein sequence, read N- to C-terminus: Interferon alpha-B (189 aa).

The signal sequence occupies residues 1-23 (MAPAWSFLLALLLLSCNAICSLG). Cystine bridges form between C24–C122 and C52–C162.

The protein belongs to the alpha/beta interferon family.

It localises to the secreted. Its function is as follows. Produced by macrophages, IFN-alpha have antiviral activities. Interferon stimulates the production of two enzymes: a protein kinase and an oligoadenylate synthetase. In Bos taurus (Bovine), this protein is Interferon alpha-B (IFNAB).